The chain runs to 179 residues: Large ribosomal subunit protein uL6 (179 aa).

The protein belongs to the universal ribosomal protein uL6 family. Part of the 50S ribosomal subunit.

Functionally, this protein binds to the 23S rRNA, and is important in its secondary structure. It is located near the subunit interface in the base of the L7/L12 stalk, and near the tRNA binding site of the peptidyltransferase center. The chain is Large ribosomal subunit protein uL6 from Gloeothece citriformis (strain PCC 7424) (Cyanothece sp. (strain PCC 7424)).